The following is a 225-amino-acid chain: PKHD-type hydroxylase YbiX (225 aa).

Residues 78–177 enclose the Fe2OG dioxygenase domain; it reads TLSTPLFNRY…RVASFMWIQS (100 aa). His-96, Asp-98, and His-158 together coordinate Fe cation. Residue Arg-168 coordinates 2-oxoglutarate.

Fe(2+) is required as a cofactor. Requires L-ascorbate as cofactor.

The polypeptide is PKHD-type hydroxylase YbiX (Escherichia coli O45:K1 (strain S88 / ExPEC)).